Here is a 180-residue protein sequence, read N- to C-terminus: Large ribosomal subunit protein uL5 (180 aa).

This sequence belongs to the universal ribosomal protein uL5 family. As to quaternary structure, part of the 50S ribosomal subunit; part of the 5S rRNA/L5/L18/L25 subcomplex. Contacts the 5S rRNA and the P site tRNA. Forms a bridge to the 30S subunit in the 70S ribosome.

Functionally, this is one of the proteins that bind and probably mediate the attachment of the 5S RNA into the large ribosomal subunit, where it forms part of the central protuberance. In the 70S ribosome it contacts protein S13 of the 30S subunit (bridge B1b), connecting the 2 subunits; this bridge is implicated in subunit movement. Contacts the P site tRNA; the 5S rRNA and some of its associated proteins might help stabilize positioning of ribosome-bound tRNAs. This Lactobacillus delbrueckii subsp. bulgaricus (strain ATCC 11842 / DSM 20081 / BCRC 10696 / JCM 1002 / NBRC 13953 / NCIMB 11778 / NCTC 12712 / WDCM 00102 / Lb 14) protein is Large ribosomal subunit protein uL5.